Here is a 315-residue protein sequence, read N- to C-terminus: Porphobilinogen deaminase (315 aa).

An S-(dipyrrolylmethanemethyl)cysteine modification is found at Cys234.

Belongs to the HMBS family. In terms of assembly, monomer. Dipyrromethane serves as cofactor.

It catalyses the reaction 4 porphobilinogen + H2O = hydroxymethylbilane + 4 NH4(+). Its pathway is porphyrin-containing compound metabolism; protoporphyrin-IX biosynthesis; coproporphyrinogen-III from 5-aminolevulinate: step 2/4. Functionally, tetrapolymerization of the monopyrrole PBG into the hydroxymethylbilane pre-uroporphyrinogen in several discrete steps. This chain is Porphobilinogen deaminase, found in Mycolicibacterium paratuberculosis (strain ATCC BAA-968 / K-10) (Mycobacterium paratuberculosis).